The following is a 328-amino-acid chain: DNA-directed RNA polymerase subunit alpha 1 (328 aa).

The interval 1–234 (MQGFVKDFLK…GQLDEFVDER (234 aa)) is alpha N-terminal domain (alpha-NTD). The alpha C-terminal domain (alpha-CTD) stretch occupies residues 248–328 (FDPILLRPVN…NWPPASLIED (81 aa)).

Belongs to the RNA polymerase alpha chain family. As to quaternary structure, homodimer. The RNAP catalytic core consists of 2 alpha, 1 beta, 1 beta' and 1 omega subunit. When a sigma factor is associated with the core the holoenzyme is formed, which can initiate transcription.

The catalysed reaction is RNA(n) + a ribonucleoside 5'-triphosphate = RNA(n+1) + diphosphate. Functionally, DNA-dependent RNA polymerase catalyzes the transcription of DNA into RNA using the four ribonucleoside triphosphates as substrates. The chain is DNA-directed RNA polymerase subunit alpha 1 from Psychromonas ingrahamii (strain DSM 17664 / CCUG 51855 / 37).